A 344-amino-acid polypeptide reads, in one-letter code: Aurora kinase B (344 aa).

The residue at position 35 (threonine 35) is a Phosphothreonine. The tract at residues 46–65 is disordered; sequence NAQPTAAPGQKVVENSSGTP. Serine 62 is subject to Phosphoserine. The residue at position 64 (threonine 64) is a Phosphothreonine. The region spanning 77–327 is the Protein kinase domain; the sequence is FEIGRPLGKG…LAQVSAHPWV (251 aa). Residues 83–91 and lysine 106 contribute to the ATP site; that span reads LGKGKFGNV. Residue aspartate 200 is the Proton acceptor of the active site. Lysine 215 bears the N6-acetyllysine mark. Position 227 is a phosphoserine (serine 227). At threonine 232 the chain carries Phosphothreonine; by autocatalysis.

The protein belongs to the protein kinase superfamily. Ser/Thr protein kinase family. Aurora subfamily. In terms of assembly, component of the chromosomal passenger complex (CPC) composed of at least BIRC5/survivin, CDCA8/borealin, INCENP, AURKB or AURKC; predominantly independent AURKB- and AURKC-containing complexes exist. Associates with RACGAP1 during M phase. Interacts with SPDYC; this interaction may be required for proper localization of active, Thr-232-phosphorylated AURKB form during prometaphase and metaphase. Interacts with p53/TP53. Interacts (via the middle kinase domain) with NOC2L (via the N- and C-terminus domains). Interacts with CDCA1. Interacts with EVI5. Interacts with JTB. Interacts with NDC80. Interacts with PSMA3. Interacts with RNF2/RING1B. Interacts with SEPTIN1. Interacts with SIRT2. Interacts with TACC1. Interacts with TTC28. The phosphorylation of Thr-232 requires the binding to INCENP and occurs by means of an autophosphorylation mechanism. Thr-232 phosphorylation is indispensable for the AURKB kinase activity. Post-translationally, acetylated at Lys-215 by KAT5 at kinetochores, increasing AURKB activity and promoting accurate chromosome segregation in mitosis. In terms of processing, ubiquitinated by different BCR (BTB-CUL3-RBX1) E3 ubiquitin ligase complexes. Ubiquitinated by the BCR(KLHL9-KLHL13) E3 ubiquitin ligase complex, ubiquitination leads to removal from mitotic chromosomes and is required for cytokinesis. During anaphase, the BCR(KLHL21) E3 ubiquitin ligase complex recruits the CPC complex from chromosomes to the spindle midzone and mediates the ubiquitination of AURKB. Ubiquitination of AURKB by BCR(KLHL21) E3 ubiquitin ligase complex may not lead to its degradation by the proteasome. Deubiquitinated by USP35; inhibiting CDH1-mediated degradation of AURKB.

It is found in the nucleus. It localises to the chromosome. The protein localises to the centromere. The protein resides in the kinetochore. Its subcellular location is the cytoplasm. It is found in the cytoskeleton. It localises to the spindle. The protein localises to the midbody. It carries out the reaction L-seryl-[protein] + ATP = O-phospho-L-seryl-[protein] + ADP + H(+). It catalyses the reaction L-threonyl-[protein] + ATP = O-phospho-L-threonyl-[protein] + ADP + H(+). Activity is greatly increased when AURKB is within the CPC complex. In particular, AURKB-phosphorylated INCENP acts as an activator of AURKB. Positive feedback between HASPIN and AURKB contributes to CPC localization. Functionally, serine/threonine-protein kinase component of the chromosomal passenger complex (CPC), a complex that acts as a key regulator of mitosis. The CPC complex has essential functions at the centromere in ensuring correct chromosome alignment and segregation and is required for chromatin-induced microtubule stabilization and spindle assembly. Involved in the bipolar attachment of spindle microtubules to kinetochores and is a key regulator for the onset of cytokinesis during mitosis. Required for central/midzone spindle assembly and cleavage furrow formation. Key component of the cytokinesis checkpoint, a process required to delay abscission to prevent both premature resolution of intercellular chromosome bridges and accumulation of DNA damage: phosphorylates CHMP4C, leading to retain abscission-competent VPS4 (VPS4A and/or VPS4B) at the midbody ring until abscission checkpoint signaling is terminated at late cytokinesis. AURKB phosphorylates the CPC complex subunits BIRC5/survivin, CDCA8/borealin and INCENP. Phosphorylation of INCENP leads to increased AURKB activity. Other known AURKB substrates involved in centromeric functions and mitosis are CENPA, DES/desmin, GPAF, KIF2C, NSUN2, RACGAP1, SEPTIN1, VIM/vimentin, HASPIN, and histone H3. A positive feedback loop involving HASPIN and AURKB contributes to localization of CPC to centromeres. Phosphorylation of VIM controls vimentin filament segregation in cytokinetic process, whereas histone H3 is phosphorylated at 'Ser-10' and 'Ser-28' during mitosis (H3S10ph and H3S28ph, respectively). AURKB is also required for kinetochore localization of BUB1 and SGO1. Phosphorylation of p53/TP53 negatively regulates its transcriptional activity. Key regulator of active promoters in resting B- and T-lymphocytes: acts by mediating phosphorylation of H3S28ph at active promoters in resting B-cells, inhibiting RNF2/RING1B-mediated ubiquitination of histone H2A and enhancing binding and activity of the USP16 deubiquitinase at transcribed genes. Acts as an inhibitor of CGAS during mitosis: catalyzes phosphorylation of the N-terminus of CGAS during the G2-M transition, blocking CGAS liquid phase separation and activation, and thereby preventing CGAS-induced autoimmunity. Phosphorylates KRT5 during anaphase and telophase. Phosphorylates ATXN10 which promotes phosphorylation of ATXN10 by PLK1 and may play a role in the regulation of cytokinesis and stimulating the proteasomal degradation of ATXN10. This Bos taurus (Bovine) protein is Aurora kinase B (AURKB).